The chain runs to 1320 residues: Junctional cadherin 5-associated protein (1320 aa).

Disordered regions lie at residues 1-124 (MYSV…GSGS), 183-202 (KKPR…KRPQ), 209-233 (YPFV…ALSP), 252-426 (GVPK…SIQY), 452-492 (DDTS…NEQS), 676-720 (ASSP…PTPT), 741-802 (NQKP…STTG), and 835-942 (ELQE…QKSQ). Polar residues-rich tracts occupy residues 58 to 71 (RTSL…NSEN) and 95 to 107 (NQPS…QPQS). Basic and acidic residues predominate over residues 108–119 (GRDDIYWSRGRQ). The segment covering 255–267 (KVPPYPPSFPSPS) has biased composition (pro residues). The segment covering 308–329 (FQDHQHRDPRGSYPTRSKDPSH) has biased composition (basic and acidic residues). Residues 338–356 (LEPPVYVPPPSYRSPPQHI) show a composition bias toward pro residues. Residues 369–378 (VSSNQSQQQV) show a composition bias toward polar residues. Over residues 404–415 (GSPPQGLPPQPY) the composition is skewed to pro residues. Polar residues predominate over residues 454 to 465 (TSYNPGLLTTQE). At T484 the chain carries Phosphothreonine. S486 bears the Phosphoserine mark. Residues 741 to 782 (NQKPSVPHLQGQTSLSPSRNSAFSRTSSAINQASMSKGTSDQ) show a composition bias toward polar residues. Over residues 849–859 (EDSEAEQPEDC) the composition is skewed to acidic residues. Position 851 is a phosphoserine (S851). A compositionally biased stretch (polar residues) spans 865–877 (KSWALQGTRTAQQ). A phosphoserine mark is found at S1027 and S1033. 2 disordered regions span residues 1085–1116 (ARRT…SLAL) and 1153–1174 (SDVD…KDEE). 2 positions are modified to phosphoserine: S1245 and S1248. The disordered stretch occupies residues 1275–1320 (DEAWQAGHLPSVSQNENGHPEVPRDKMSDQDLWCADSYDPSRVERV). Residues 1292–1303 (GHPEVPRDKMSD) show a composition bias toward basic and acidic residues.

Its subcellular location is the cell junction. It localises to the adherens junction. This is Junctional cadherin 5-associated protein from Mus musculus (Mouse).